A 145-amino-acid polypeptide reads, in one-letter code: Cell division protein SepF (145 aa).

This sequence belongs to the SepF family. Homodimer. Interacts with FtsZ.

Its subcellular location is the cytoplasm. Its function is as follows. Cell division protein that is part of the divisome complex and is recruited early to the Z-ring. Probably stimulates Z-ring formation, perhaps through the cross-linking of FtsZ protofilaments. Its function overlaps with FtsA. The chain is Cell division protein SepF from Lactobacillus acidophilus (strain ATCC 700396 / NCK56 / N2 / NCFM).